Here is a 211-residue protein sequence, read N- to C-terminus: MLTIALSKGRILDDTLPLLAEAGIVPTENPDKSRKLIIPTTQDDVRLLIVRATDVPTYVEHGAADLGVAGKDVLMEYGGQGLYEPLDLQIAQCKLMTAGVVGAPEPKGRLRVATKFVNVAKRYYAEQGRQVDIIKLYGSMELAPLINLADKIIDVVDTGNTLRANGLEPQELIATISSRLVVNKASMKMQHARIQNLIDTLRQAVESRHRG.

Belongs to the ATP phosphoribosyltransferase family. Short subfamily. Heteromultimer composed of HisG and HisZ subunits.

It localises to the cytoplasm. It carries out the reaction 1-(5-phospho-beta-D-ribosyl)-ATP + diphosphate = 5-phospho-alpha-D-ribose 1-diphosphate + ATP. It participates in amino-acid biosynthesis; L-histidine biosynthesis; L-histidine from 5-phospho-alpha-D-ribose 1-diphosphate: step 1/9. Catalyzes the condensation of ATP and 5-phosphoribose 1-diphosphate to form N'-(5'-phosphoribosyl)-ATP (PR-ATP). Has a crucial role in the pathway because the rate of histidine biosynthesis seems to be controlled primarily by regulation of HisG enzymatic activity. The sequence is that of ATP phosphoribosyltransferase from Pseudomonas putida (strain GB-1).